Consider the following 346-residue polypeptide: Carbamoyl phosphate synthase small chain (346 aa).

Residues 1–160 form a CPSase region; the sequence is MEDGSVFAGR…SVKEPVLLGE (160 aa). L-glutamine contacts are provided by serine 39, glycine 209, and glycine 211. A Glutamine amidotransferase type-1 domain is found at 164–346; that stretch reads CIGVVDCGVK…FLKLVERHGH (183 aa). Cysteine 237 functions as the Nucleophile in the catalytic mechanism. L-glutamine contacts are provided by leucine 238, glutamine 241, asparagine 280, glycine 282, and tyrosine 283. Active-site residues include histidine 320 and glutamate 322.

The protein belongs to the CarA family. As to quaternary structure, composed of two chains; the small (or glutamine) chain promotes the hydrolysis of glutamine to ammonia, which is used by the large (or ammonia) chain to synthesize carbamoyl phosphate. Tetramer of heterodimers (alpha,beta)4.

The enzyme catalyses hydrogencarbonate + L-glutamine + 2 ATP + H2O = carbamoyl phosphate + L-glutamate + 2 ADP + phosphate + 2 H(+). It carries out the reaction L-glutamine + H2O = L-glutamate + NH4(+). It functions in the pathway amino-acid biosynthesis; L-arginine biosynthesis; carbamoyl phosphate from bicarbonate: step 1/1. The protein operates within pyrimidine metabolism; UMP biosynthesis via de novo pathway; (S)-dihydroorotate from bicarbonate: step 1/3. Functionally, small subunit of the glutamine-dependent carbamoyl phosphate synthetase (CPSase). CPSase catalyzes the formation of carbamoyl phosphate from the ammonia moiety of glutamine, carbonate, and phosphate donated by ATP, constituting the first step of 2 biosynthetic pathways, one leading to arginine and/or urea and the other to pyrimidine nucleotides. The small subunit (glutamine amidotransferase) binds and cleaves glutamine to supply the large subunit with the substrate ammonia. This is Carbamoyl phosphate synthase small chain from Pyrobaculum aerophilum (strain ATCC 51768 / DSM 7523 / JCM 9630 / CIP 104966 / NBRC 100827 / IM2).